The sequence spans 161 residues: SsrA-binding protein (161 aa).

It belongs to the SmpB family.

It localises to the cytoplasm. Functionally, required for rescue of stalled ribosomes mediated by trans-translation. Binds to transfer-messenger RNA (tmRNA), required for stable association of tmRNA with ribosomes. tmRNA and SmpB together mimic tRNA shape, replacing the anticodon stem-loop with SmpB. tmRNA is encoded by the ssrA gene; the 2 termini fold to resemble tRNA(Ala) and it encodes a 'tag peptide', a short internal open reading frame. During trans-translation Ala-aminoacylated tmRNA acts like a tRNA, entering the A-site of stalled ribosomes, displacing the stalled mRNA. The ribosome then switches to translate the ORF on the tmRNA; the nascent peptide is terminated with the 'tag peptide' encoded by the tmRNA and targeted for degradation. The ribosome is freed to recommence translation, which seems to be the essential function of trans-translation. The sequence is that of SsrA-binding protein from Vesicomyosocius okutanii subsp. Calyptogena okutanii (strain HA).